The following is an 878-amino-acid chain: Serine/threonine-protein kinase D2 (878 aa).

Residues 1-12 (MATAPSYPAGLP) are compositionally biased toward low complexity. A disordered region spans residues 1–35 (MATAPSYPAGLPGSPGPGSPPPPGGLELQSPPPLL). The segment covering 14 to 35 (SPGPGSPPPPGGLELQSPPPLL) has biased composition (pro residues). Serine 30 carries the post-translational modification Phosphoserine. A Phosphotyrosine modification is found at tyrosine 87. The Phorbol-ester/DAG-type 1 zinc-finger motif lies at 138–188 (PHALTVHSYRAPAFCDHCGEMLFGLVRQGLKCDGCGLNYHKRCAFSIPNNC). Phosphoserine occurs at positions 197, 198, 200, 203, 206, 212, and 214. The interval 224–247 (RSTTELLPRRPPSSSSSSSASSYT) is disordered. A compositionally biased stretch (low complexity) spans 236–245 (SSSSSSSASS). A Phosphoserine; by CSNK1D and CSNK1E modification is found at serine 244. The Phorbol-ester/DAG-type 2 zinc finger occupies 264–314 (PHTFLIHSYTRPTVCQACKKLLKGLFRQGLQCKDCKFNCHKRCATRVPNDC). Residues 343–373 (ESEDSGVIPGSHSENALHASEEEEGEGGKAQ) form a disordered region. Positions 397–509 (TTLREGWVVH…WETAIRQALM (113 aa)) constitute a PH domain. A Phosphotyrosine modification is found at tyrosine 407. Tyrosine 438 bears the Phosphotyrosine; by ABL1 mark. Serine 518 is subject to Phosphoserine. The 257-residue stretch at 551 to 807 (IFPDEVLGSG…VDKSLSHPWL (257 aa)) folds into the Protein kinase domain. Residues 557–565 (LGSGQFGVV) and lysine 580 contribute to the ATP site. Aspartate 674 (proton acceptor) is an active-site residue. Serine 706 carries the phosphoserine; by PKC modification. Serine 710 carries the post-translational modification Phosphoserine. Phosphotyrosine; by ABL1 is present on tyrosine 717. An Important for ABL1-mediated Tyr-717 phosphorylation motif is present at residues 724–726 (LNQ). Positions 844–869 (HPLPGSGLPTDRDLGGACPPQDHDMQ) are disordered. Serine 876 is subject to Phosphoserine; by autocatalysis.

The protein belongs to the protein kinase superfamily. CAMK Ser/Thr protein kinase family. PKD subfamily. As to quaternary structure, interacts (via C-terminus) with LCK. Interacts (via N-terminal AP-rich region) with CIB1 isoform 2. Interacts (via N-terminus and zing-finger domain 1 and 2) with PRKCD in response to oxidative stress; the interaction is independent of PRKD2 tyrosine phosphorylation. Mg(2+) serves as cofactor. Phosphorylation of Ser-876 correlates with the activation status of the kinase. Ser-706 or/and Ser-710 are probably phosphorylated by PKC. Phosphorylation at Ser-244 by CSNK1D and CSNK1E promotes nuclear localization and substrate targeting. Phosphorylation at Ser-244, Ser-706 and Ser-710 is required for nuclear localization. Phosphorylated at Tyr-438 by ABL1 in response to oxidative stress. Phosphorylated at Tyr-717 by ABL1 specifically in response to oxidative stress; requires prior phosphorylation at Ser-706 or/and Ser-710. Widely expressed.

The protein resides in the cytoplasm. It is found in the cell membrane. Its subcellular location is the nucleus. The protein localises to the golgi apparatus. It localises to the trans-Golgi network. It catalyses the reaction L-seryl-[protein] + ATP = O-phospho-L-seryl-[protein] + ADP + H(+). The catalysed reaction is L-threonyl-[protein] + ATP = O-phospho-L-threonyl-[protein] + ADP + H(+). With respect to regulation, activated by DAG and phorbol esters. Phorbol-ester/DAG-type domains bind DAG, mediating translocation to membranes. Autophosphorylation of Ser-710 and phosphorylation of Ser-706 by PKC relieves auto-inhibition by the PH domain. Catalytic activity is further increased by phosphorylation at Tyr-717 in response to oxidative stress. Serine/threonine-protein kinase that converts transient diacylglycerol (DAG) signals into prolonged physiological effects downstream of PKC, and is involved in the regulation of cell proliferation via MAPK1/3 (ERK1/2) signaling, oxidative stress-induced NF-kappa-B activation, inhibition of HDAC7 transcriptional repression, signaling downstream of T-cell antigen receptor (TCR) and cytokine production, and plays a role in Golgi membrane trafficking, angiogenesis, secretory granule release and cell adhesion. May potentiate mitogenesis induced by the neuropeptide bombesin by mediating an increase in the duration of MAPK1/3 (ERK1/2) signaling, which leads to accumulation of immediate-early gene products including FOS that stimulate cell cycle progression. In response to oxidative stress, is phosphorylated at Tyr-438 and Tyr-717 by ABL1, which leads to the activation of PRKD2 without increasing its catalytic activity, and mediates activation of NF-kappa-B. In response to the activation of the gastrin receptor CCKBR, is phosphorylated at Ser-244 by CSNK1D and CSNK1E, translocates to the nucleus, phosphorylates HDAC7, leading to nuclear export of HDAC7 and inhibition of HDAC7 transcriptional repression of NR4A1/NUR77. Upon TCR stimulation, is activated independently of ZAP70, translocates from the cytoplasm to the nucleus and is required for interleukin-2 (IL2) promoter up-regulation. During adaptive immune responses, is required in peripheral T-lymphocytes for the production of the effector cytokines IL2 and IFNG after TCR engagement and for optimal induction of antibody responses to antigens. In epithelial cells stimulated with lysophosphatidic acid (LPA), is activated through a PKC-dependent pathway and mediates LPA-stimulated interleukin-8 (IL8) secretion via a NF-kappa-B-dependent pathway. During TCR-induced T-cell activation, interacts with and is activated by the tyrosine kinase LCK, which results in the activation of the NFAT transcription factors. In the trans-Golgi network (TGN), regulates the fission of transport vesicles that are on their way to the plasma membrane and in polarized cells is involved in the transport of proteins from the TGN to the basolateral membrane. Plays an important role in endothelial cell proliferation and migration prior to angiogenesis, partly through modulation of the expression of KDR/VEGFR2 and FGFR1, two key growth factor receptors involved in angiogenesis. In secretory pathway, is required for the release of chromogranin-A (CHGA)-containing secretory granules from the TGN. Downstream of PRKCA, plays important roles in angiotensin-2-induced monocyte adhesion to endothelial cells. Plays a regulatory role in angiogenesis and tumor growth by phosphorylating a downstream mediator CIB1 isoform 2, resulting in vascular endothelial growth factor A (VEGFA) secretion. The polypeptide is Serine/threonine-protein kinase D2 (PRKD2) (Homo sapiens (Human)).